The following is a 396-amino-acid chain: tRNA-specific 2-thiouridylase MnmA (396 aa).

ATP is bound by residues 11 to 18 (GLSGGVDS) and methionine 37. The segment at 97 to 99 (NPD) is interaction with target base in tRNA. Cysteine 102 acts as the Nucleophile in catalysis. Cysteine 102 and cysteine 225 are joined by a disulfide. Glycine 126 is a binding site for ATP. Residues 175–177 (KDQ) form an interaction with tRNA region. The Cysteine persulfide intermediate role is filled by cysteine 225. The segment at 343–344 (RY) is interaction with tRNA.

The protein belongs to the MnmA/TRMU family.

It localises to the cytoplasm. It catalyses the reaction S-sulfanyl-L-cysteinyl-[protein] + uridine(34) in tRNA + AH2 + ATP = 2-thiouridine(34) in tRNA + L-cysteinyl-[protein] + A + AMP + diphosphate + H(+). Functionally, catalyzes the 2-thiolation of uridine at the wobble position (U34) of tRNA, leading to the formation of s(2)U34. The chain is tRNA-specific 2-thiouridylase MnmA from Methylibium petroleiphilum (strain ATCC BAA-1232 / LMG 22953 / PM1).